We begin with the raw amino-acid sequence, 310 residues long: ATP phosphoribosyltransferase (310 aa).

Belongs to the ATP phosphoribosyltransferase family.

It localises to the cytoplasm. The enzyme catalyses 1-(5-phospho-beta-D-ribosyl)-ATP + diphosphate = 5-phospho-alpha-D-ribose 1-diphosphate + ATP. The protein operates within amino-acid biosynthesis; L-histidine biosynthesis; L-histidine from 5-phospho-alpha-D-ribose 1-diphosphate: step 1/9. In terms of biological role, catalyzes the condensation of ATP and 5-phosphoribose 1-diphosphate to form N'-(5'-phosphoribosyl)-ATP (PR-ATP). Has a crucial role in the pathway because the rate of histidine biosynthesis seems to be controlled primarily by regulation of HisG enzymatic activity. The polypeptide is ATP phosphoribosyltransferase (his1) (Schizosaccharomyces pombe (strain 972 / ATCC 24843) (Fission yeast)).